A 104-amino-acid chain; its full sequence is Large ribosomal subunit protein uL24 (104 aa).

It belongs to the universal ribosomal protein uL24 family. Part of the 50S ribosomal subunit.

One of two assembly initiator proteins, it binds directly to the 5'-end of the 23S rRNA, where it nucleates assembly of the 50S subunit. In terms of biological role, one of the proteins that surrounds the polypeptide exit tunnel on the outside of the subunit. The chain is Large ribosomal subunit protein uL24 from Shewanella denitrificans (strain OS217 / ATCC BAA-1090 / DSM 15013).